The primary structure comprises 323 residues: Ubiquinone biosynthesis protein COQ4, mitochondrial (323 aa).

A mitochondrion-targeting transit peptide spans 1–29 (MLKSTVSNTRIKCCRIDQRRNYLFTALAS). Positions 205, 206, 209, and 221 each coordinate Zn(2+).

The protein belongs to the COQ4 family. In terms of assembly, component of a multi-subunit COQ enzyme complex, composed of at least COQ3, COQ4, COQ5, COQ6, COQ7 and COQ9. It depends on Zn(2+) as a cofactor.

The protein resides in the mitochondrion inner membrane. The enzyme catalyses a 4-hydroxy-3-methoxy-5-(all-trans-polyprenyl)benzoate + H(+) = a 2-methoxy-6-(all-trans-polyprenyl)phenol + CO2. The protein operates within cofactor biosynthesis; ubiquinone biosynthesis. In terms of biological role, lyase that catalyzes the C1-decarboxylation of 4-hydroxy-3-methoxy-5-(all-trans-polyprenyl)benzoic acid into 2-methoxy-6-(all-trans-polyprenyl)phenol during ubiquinone biosynthesis. In Candida dubliniensis (strain CD36 / ATCC MYA-646 / CBS 7987 / NCPF 3949 / NRRL Y-17841) (Yeast), this protein is Ubiquinone biosynthesis protein COQ4, mitochondrial.